The sequence spans 383 residues: S-adenosylmethionine synthase (383 aa).

H15 contacts ATP. D17 serves as a coordination point for Mg(2+). E43 lines the K(+) pocket. L-methionine-binding residues include E56 and Q99. The tract at residues 99 to 109 (QSPDINQGVDR) is flexible loop. ATP-binding positions include 164 to 166 (DAK), 230 to 231 (RF), D239, 245 to 246 (RK), A262, and K266. D239 provides a ligand contact to L-methionine. K270 provides a ligand contact to L-methionine.

It belongs to the AdoMet synthase family. As to quaternary structure, homotetramer; dimer of dimers. It depends on Mg(2+) as a cofactor. The cofactor is K(+).

It is found in the cytoplasm. The catalysed reaction is L-methionine + ATP + H2O = S-adenosyl-L-methionine + phosphate + diphosphate. Its pathway is amino-acid biosynthesis; S-adenosyl-L-methionine biosynthesis; S-adenosyl-L-methionine from L-methionine: step 1/1. Its function is as follows. Catalyzes the formation of S-adenosylmethionine (AdoMet) from methionine and ATP. The overall synthetic reaction is composed of two sequential steps, AdoMet formation and the subsequent tripolyphosphate hydrolysis which occurs prior to release of AdoMet from the enzyme. The sequence is that of S-adenosylmethionine synthase from Shewanella baltica (strain OS223).